Here is a 352-residue protein sequence, read N- to C-terminus: Dihydrorhizobitoxine desaturase (352 aa).

The next 3 helical transmembrane spans lie at 53-73, 89-109, and 204-224; these read LATL…IGAY, LAKN…YPLF, and IGIL…LFWI.

Belongs to the fatty acid desaturase type 1 family.

The protein resides in the cell inner membrane. It carries out the reaction dihydrorhizobitoxine + 2 reduced [2Fe-2S]-[ferredoxin] + O2 + 2 H(+) = rhizobitoxine + 2 oxidized [2Fe-2S]-[ferredoxin] + 2 H2O. Its function is as follows. Involved in the biosynthesis of the nodulation enhancer compound rhizobitoxine. Catalyzes the final step of the pathway, the introduction of a carbon double bond into the C3 position of dihydrorhizobitoxine to produce rhizobitoxine. This chain is Dihydrorhizobitoxine desaturase, found in Bradyrhizobium elkanii.